The primary structure comprises 215 residues: Redox-sensing transcriptional repressor Rex (215 aa).

A DNA-binding region (H-T-H motif) is located at residues 18-57 (LYYRFLKNLHASGKQRVSSAELSDAVKVDSATIRRDFSYF). 92–97 (GVGNLG) lines the NAD(+) pocket.

Belongs to the transcriptional regulatory Rex family. Homodimer.

The protein localises to the cytoplasm. Modulates transcription in response to changes in cellular NADH/NAD(+) redox state. This Bacillus licheniformis (strain ATCC 14580 / DSM 13 / JCM 2505 / CCUG 7422 / NBRC 12200 / NCIMB 9375 / NCTC 10341 / NRRL NRS-1264 / Gibson 46) protein is Redox-sensing transcriptional repressor Rex.